Here is a 304-residue protein sequence, read N- to C-terminus: Aspartate carbamoyltransferase catalytic subunit (304 aa).

Carbamoyl phosphate-binding residues include Arg53 and Thr54. Lys82 contributes to the L-aspartate binding site. Arg103, His131, and Gln134 together coordinate carbamoyl phosphate. The L-aspartate site is built by Arg163 and Arg224. Residues Leu263 and Pro264 each contribute to the carbamoyl phosphate site.

Belongs to the aspartate/ornithine carbamoyltransferase superfamily. ATCase family. In terms of assembly, heterooligomer of catalytic and regulatory chains.

The catalysed reaction is carbamoyl phosphate + L-aspartate = N-carbamoyl-L-aspartate + phosphate + H(+). It participates in pyrimidine metabolism; UMP biosynthesis via de novo pathway; (S)-dihydroorotate from bicarbonate: step 2/3. Catalyzes the condensation of carbamoyl phosphate and aspartate to form carbamoyl aspartate and inorganic phosphate, the committed step in the de novo pyrimidine nucleotide biosynthesis pathway. This is Aspartate carbamoyltransferase catalytic subunit from Haloarcula marismortui (strain ATCC 43049 / DSM 3752 / JCM 8966 / VKM B-1809) (Halobacterium marismortui).